The sequence spans 135 residues: Transcription antitermination protein NusB (135 aa).

The protein belongs to the NusB family.

In terms of biological role, involved in transcription antitermination. Required for transcription of ribosomal RNA (rRNA) genes. Binds specifically to the boxA antiterminator sequence of the ribosomal RNA (rrn) operons. This Nocardioides sp. (strain ATCC BAA-499 / JS614) protein is Transcription antitermination protein NusB.